Here is a 476-residue protein sequence, read N- to C-terminus: ATP synthase subunit beta, chloroplastic (476 aa).

156 to 163 serves as a coordination point for ATP; it reads GGAGVGKT.

The protein belongs to the ATPase alpha/beta chains family. As to quaternary structure, F-type ATPases have 2 components, CF(1) - the catalytic core - and CF(0) - the membrane proton channel. CF(1) has five subunits: alpha(3), beta(3), gamma(1), delta(1), epsilon(1). CF(0) has four main subunits: a(1), b(1), b'(1) and c(9-12).

The protein resides in the plastid. It is found in the chloroplast thylakoid membrane. It catalyses the reaction ATP + H2O + 4 H(+)(in) = ADP + phosphate + 5 H(+)(out). In terms of biological role, produces ATP from ADP in the presence of a proton gradient across the membrane. The catalytic sites are hosted primarily by the beta subunits. The polypeptide is ATP synthase subunit beta, chloroplastic (Fucus vesiculosus (Bladder wrack)).